Consider the following 499-residue polypeptide: Sensor histidine kinase PdtaS (499 aa).

The segment at 4 to 149 (LGDLLAEHTM…PLEGAYLDCA (146 aa)) is GAF. A PAS-like region spans residues 178–289 (DGFIRLNEGG…TEVKRRDRAL (112 aa)). One can recognise a Histidine kinase domain in the interval 298–493 (EIHHRVKNNL…DVVLRVPIGR (196 aa)). Residue H301 is modified to Phosphohistidine; by autocatalysis.

Autophosphorylated.

Its subcellular location is the cytoplasm. The enzyme catalyses ATP + protein L-histidine = ADP + protein N-phospho-L-histidine.. In terms of biological role, member of the two-component regulatory system PdtaR/PdtaS. This two-component system plays an essential role in mycobacterial adaptation to poor nutrient conditions. Nutrient deprivation results in increasing intracellular concentrations of cyclic diguanosine monophosphate (c-di-GMP), which binds to the PdtaS sensor and promotes its autophosphorylation, leading to the activation of the signaling cascade. The phosphate group is then transferred to PdtaR. The polypeptide is Sensor histidine kinase PdtaS (Mycolicibacterium smegmatis (strain ATCC 700084 / mc(2)155) (Mycobacterium smegmatis)).